The sequence spans 278 residues: Transmembrane protein 45B (278 aa).

The next 7 helical transmembrane spans lie at 7-27 (HALPGSFFLIFGLWWSVKYPL), 49-69 (IIEGAVKALFAVIGILAEQFV), 95-115 (YLFFGVSGIIDMLTYLYFNIV), 117-137 (LGLDRVVLAMAVFVEGFLFYF), 149-169 (IHSLLLFSLFGATISICLEVI), 183-203 (LLILQGTWFWQIGFVLFPPFG), and 215-235 (VMFITMCFCWHYLVALCITAI). Ser-273 and Ser-275 each carry phosphoserine.

Belongs to the TMEM45 family.

The protein localises to the endosome membrane. It localises to the lysosome membrane. The protein resides in the golgi apparatus. Its subcellular location is the trans-Golgi network membrane. Functionally, plays a role in innate immunity. The sequence is that of Transmembrane protein 45B (Tmem45b) from Rattus norvegicus (Rat).